A 370-amino-acid chain; its full sequence is Gap junction delta-4 protein (370 aa).

At 1-19 (MEGVDLLGFLIITLNCNVT) the chain is on the cytoplasmic side. Residues 20-40 (MXGKLWFVLTMLLRMLVIVLA) traverse the membrane as a helical segment. Residues 41 to 76 (GRPVYQDEQERFVCNTLQPGCANVCYDVFSPVSHLR) lie on the Extracellular side of the membrane. A helical transmembrane segment spans residues 77–97 (FWLIQGVCVLLPSAVFSVYVL). Topologically, residues 98 to 146 (HRGATLAALGPRRCPEPRDTASGQRRCPGSCRERGGLEVPDFSAGYIIH) are cytoplasmic. Residues 147 to 167 (LLLRTLLEAAFGALNYLLFGF) form a helical membrane-spanning segment. At 168 to 196 (LAPNKFPCTRPPCTGVVDCYVSRPTEKSL) the chain is on the extracellular side. The chain crosses the membrane as a helical span at residues 197–217 (LMLFLWAVSALSFLLGLADLV). Residues 218-370 (CSLRRLMRRR…HLRARKSEWV (153 aa)) lie on the Cytoplasmic side of the membrane. The tract at residues 227-370 (RPGPPTSPSI…HLRARKSEWV (144 aa)) is disordered. The span at 246–260 (PEGRPTDKEGGREQE) shows a compositional bias: basic and acidic residues. Residues 331–345 (PSAAPSHLAAHPSCS) show a composition bias toward low complexity.

The protein belongs to the connexin family. Delta-type subfamily. A connexon is composed of a hexamer of connexins.

It localises to the cell membrane. The protein localises to the cell junction. The protein resides in the gap junction. In terms of biological role, one gap junction consists of a cluster of closely packed pairs of transmembrane channels, the connexons, through which materials of low MW diffuse from one cell to a neighboring cell. This is Gap junction delta-4 protein (GJD4) from Macaca fascicularis (Crab-eating macaque).